The sequence spans 143 residues: Large ribosomal subunit protein uL11 (143 aa).

The protein belongs to the universal ribosomal protein uL11 family. In terms of assembly, part of the ribosomal stalk of the 50S ribosomal subunit. Interacts with L10 and the large rRNA to form the base of the stalk. L10 forms an elongated spine to which L12 dimers bind in a sequential fashion forming a multimeric L10(L12)X complex. Post-translationally, one or more lysine residues are methylated.

Forms part of the ribosomal stalk which helps the ribosome interact with GTP-bound translation factors. This chain is Large ribosomal subunit protein uL11, found in Pseudomonas putida (strain ATCC 700007 / DSM 6899 / JCM 31910 / BCRC 17059 / LMG 24140 / F1).